We begin with the raw amino-acid sequence, 90 residues long: Probable Fe(2+)-trafficking protein (90 aa).

The protein belongs to the Fe(2+)-trafficking protein family. In terms of assembly, monomer.

Its function is as follows. Could be a mediator in iron transactions between iron acquisition and iron-requiring processes, such as synthesis and/or repair of Fe-S clusters in biosynthetic enzymes. The chain is Probable Fe(2+)-trafficking protein from Enterobacter sp. (strain 638).